Consider the following 87-residue polypeptide: Small ribosomal subunit protein bS16 (87 aa).

It belongs to the bacterial ribosomal protein bS16 family.

In Fusobacterium nucleatum subsp. nucleatum (strain ATCC 25586 / DSM 15643 / BCRC 10681 / CIP 101130 / JCM 8532 / KCTC 2640 / LMG 13131 / VPI 4355), this protein is Small ribosomal subunit protein bS16.